Consider the following 336-residue polypeptide: Uroporphyrinogen decarboxylase (336 aa).

Residues 24-28 (RQVGR), Asp73, Tyr142, Ser197, and His312 each bind substrate.

This sequence belongs to the uroporphyrinogen decarboxylase family. As to quaternary structure, homodimer.

Its subcellular location is the cytoplasm. It carries out the reaction uroporphyrinogen III + 4 H(+) = coproporphyrinogen III + 4 CO2. The protein operates within porphyrin-containing compound metabolism; protoporphyrin-IX biosynthesis; coproporphyrinogen-III from 5-aminolevulinate: step 4/4. Catalyzes the decarboxylation of four acetate groups of uroporphyrinogen-III to yield coproporphyrinogen-III. This chain is Uroporphyrinogen decarboxylase, found in Chlamydia trachomatis serovar L2 (strain ATCC VR-902B / DSM 19102 / 434/Bu).